The primary structure comprises 329 residues: Glycerol-3-phosphate dehydrogenase [NAD(P)+] (329 aa).

Positions 11, 30, and 103 each coordinate NADPH. Residues Lys103, Gly132, and Ser134 each coordinate sn-glycerol 3-phosphate. Position 136 (Ala136) interacts with NADPH. Sn-glycerol 3-phosphate-binding residues include Lys187, Asp240, Ser250, Arg251, and Asn252. Lys187 serves as the catalytic Proton acceptor. Residue Arg251 participates in NADPH binding. NADPH contacts are provided by Val275 and Glu277.

The protein belongs to the NAD-dependent glycerol-3-phosphate dehydrogenase family.

The protein resides in the cytoplasm. The catalysed reaction is sn-glycerol 3-phosphate + NAD(+) = dihydroxyacetone phosphate + NADH + H(+). The enzyme catalyses sn-glycerol 3-phosphate + NADP(+) = dihydroxyacetone phosphate + NADPH + H(+). It participates in membrane lipid metabolism; glycerophospholipid metabolism. In terms of biological role, catalyzes the reduction of the glycolytic intermediate dihydroxyacetone phosphate (DHAP) to sn-glycerol 3-phosphate (G3P), the key precursor for phospholipid synthesis. This chain is Glycerol-3-phosphate dehydrogenase [NAD(P)+], found in Dechloromonas aromatica (strain RCB).